The sequence spans 337 residues: Phosphate acyltransferase (337 aa).

It belongs to the PlsX family. In terms of assembly, homodimer. Probably interacts with PlsY.

It localises to the cytoplasm. It carries out the reaction a fatty acyl-[ACP] + phosphate = an acyl phosphate + holo-[ACP]. The protein operates within lipid metabolism; phospholipid metabolism. Functionally, catalyzes the reversible formation of acyl-phosphate (acyl-PO(4)) from acyl-[acyl-carrier-protein] (acyl-ACP). This enzyme utilizes acyl-ACP as fatty acyl donor, but not acyl-CoA. The sequence is that of Phosphate acyltransferase from Halalkalibacterium halodurans (strain ATCC BAA-125 / DSM 18197 / FERM 7344 / JCM 9153 / C-125) (Bacillus halodurans).